Consider the following 138-residue polypeptide: Superoxide dismutase [Mn] (138 aa).

Residues Q1, H49, D133, and H137 each coordinate Mn(2+).

The protein belongs to the iron/manganese superoxide dismutase family. It depends on Mn(2+) as a cofactor.

It carries out the reaction 2 superoxide + 2 H(+) = H2O2 + O2. Destroys superoxide anion radicals which are normally produced within the cells and which are toxic to biological systems. This chain is Superoxide dismutase [Mn] (sodA), found in Mycobacteroides chelonae (Mycobacterium chelonae).